The sequence spans 390 residues: 1-deoxy-D-xylulose 5-phosphate reductoisomerase (390 aa).

8 residues coordinate NADPH: Thr-10, Gly-11, Ser-12, Ile-13, Ala-36, Lys-37, Asn-38, and Asn-122. Lys-123 contacts 1-deoxy-D-xylulose 5-phosphate. Residue Glu-124 coordinates NADPH. Residue Asp-148 coordinates Mn(2+). Residues Ser-149, Glu-150, Ser-174, and His-197 each coordinate 1-deoxy-D-xylulose 5-phosphate. Glu-150 provides a ligand contact to Mn(2+). Gly-203 is an NADPH binding site. The 1-deoxy-D-xylulose 5-phosphate site is built by Ser-210, Asn-215, Lys-216, and Glu-219. A Mn(2+)-binding site is contributed by Glu-219.

The protein belongs to the DXR family. Mg(2+) serves as cofactor. Requires Mn(2+) as cofactor.

The enzyme catalyses 2-C-methyl-D-erythritol 4-phosphate + NADP(+) = 1-deoxy-D-xylulose 5-phosphate + NADPH + H(+). The protein operates within isoprenoid biosynthesis; isopentenyl diphosphate biosynthesis via DXP pathway; isopentenyl diphosphate from 1-deoxy-D-xylulose 5-phosphate: step 1/6. Catalyzes the NADPH-dependent rearrangement and reduction of 1-deoxy-D-xylulose-5-phosphate (DXP) to 2-C-methyl-D-erythritol 4-phosphate (MEP). This Trichlorobacter lovleyi (strain ATCC BAA-1151 / DSM 17278 / SZ) (Geobacter lovleyi) protein is 1-deoxy-D-xylulose 5-phosphate reductoisomerase.